A 285-amino-acid polypeptide reads, in one-letter code: PHO85 cyclin-7 (285 aa).

Over residues 1-14 the composition is skewed to low complexity; sequence MELSSPSKKTTTSP. Positions 1 to 42 are disordered; that stretch reads MELSSPSKKTTTSPINIPGGNRDNLIIGPHSHSFKTDPFSSN. Residue S69 is modified to Phosphoserine.

This sequence belongs to the cyclin family. PHO80 subfamily. Forms a cyclin-CDK complex with PHO85. Interacts with the substrate proteins MMR1 and YJL084C. Interacts with the CDK inhibitor (CKI) PHO81.

The protein localises to the cytoplasm. With respect to regulation, the PCL7-PHO85 cyclin-CDK is inhibited by PHO81 in low-phosphate conditions. In terms of biological role, cyclin partner of the cyclin-dependent kinase (CDK) PHO85. Together with cyclin PCL6, controls glycogen phosphorylase and glycogen synthase activities in response to nutrient availablility. The PCL7-PHO85 cyclin-CDK holoenzyme has GLC8 kinase activity and phosphorylates and inactivates the phosphatase PP1-2 inhibitor GLC8, causing activation of PP1-2, which then dephosphorylates and activates glycogen phosphorylase. PCL7-PHO85 also phosphorylates MMR1 and YJL084C. This Saccharomyces cerevisiae (strain ATCC 204508 / S288c) (Baker's yeast) protein is PHO85 cyclin-7 (PCL7).